Consider the following 235-residue polypeptide: uncharacterized protein (235 aa).

2 disordered regions span residues M1–N47 and Q78–Q128. Positions H20 to P33 are enriched in polar residues. The segment covering Q84–S98 has biased composition (low complexity). Residues V106–Q128 show a composition bias toward polar residues.

This is an uncharacterized protein from Saccharomyces cerevisiae (strain ATCC 204508 / S288c) (Baker's yeast).